The following is a 305-amino-acid chain: Large ribosomal subunit protein uL2m (305 aa).

The transit peptide at 1-60 (MALCALTRALRSLNLAPPTVAAPAPSLFPAAQMMNNGLLQQPSALMLLPCRPVLTSVALN) directs the protein to the mitochondrion. The disordered stretch occupies residues 264–283 (RWLGKRPNSGRWHRKGGWAG). Residues 274-283 (RWHRKGGWAG) show a composition bias toward basic residues.

The protein belongs to the universal ribosomal protein uL2 family. In terms of assembly, component of the mitochondrial large ribosomal subunit (mt-LSU). Mature mammalian 55S mitochondrial ribosomes consist of a small (28S) and a large (39S) subunit. The 28S small subunit contains a 12S ribosomal RNA (12S mt-rRNA) and 30 different proteins. The 39S large subunit contains a 16S rRNA (16S mt-rRNA), a copy of mitochondrial valine transfer RNA (mt-tRNA(Val)), which plays an integral structural role, and 52 different proteins.

The protein localises to the mitochondrion. In Homo sapiens (Human), this protein is Large ribosomal subunit protein uL2m (MRPL2).